The chain runs to 340 residues: GTP-binding protein REM 2 (340 aa).

Over residues 1–13 (MHTDLDTDMDMDT) the composition is skewed to acidic residues. The disordered stretch occupies residues 1 to 107 (MHTDLDTDMD…SDSLGSGEAA (107 aa)). Position 27 is a phosphoserine (serine 27). Residues 40–53 (LLKKSEKLLAELDR) show a composition bias toward basic and acidic residues. A compositionally biased stretch (low complexity) spans 93–104 (SSSGSSDSLGSG). Residues 121-128 (GESGVGKS), 229-232 (NKSD), and 260-261 (AA) contribute to the GTP site. A disordered region spans residues 283–308 (RNHAGGQRPDPGSPEGPAPPARRESL). The span at 293–302 (PGSPEGPAPP) shows a compositional bias: pro residues. At serine 295 the chain carries Phosphoserine.

Belongs to the small GTPase superfamily. RGK family.

The protein localises to the cell membrane. Its function is as follows. Binds GTP saturably and exhibits a low intrinsic rate of GTP hydrolysis. This Homo sapiens (Human) protein is GTP-binding protein REM 2 (REM2).